A 187-amino-acid chain; its full sequence is MIKEILEKTGALMEGHFILSSGKHSSRYVQCARLFEFPEYGDIVGEELAKLLRKYDVETVVGPAMGGVILSYVVARYLKARSLFAERENGVMKLRRGFFVRPGEKAAVVEDVVTTGGSVKEVIELLKEYGANVVCVGSIIDRSGGKVDFGVPFESLLKLDLPVYDPEDCPLCKQGIPAEKPGSRGLK.

5-phospho-alpha-D-ribose 1-diphosphate is bound at residue 110–118; the sequence is EDVVTTGGS. Orotate-binding residues include threonine 114 and arginine 142.

The protein belongs to the purine/pyrimidine phosphoribosyltransferase family. PyrE subfamily. As to quaternary structure, homodimer. Mg(2+) is required as a cofactor.

It catalyses the reaction orotidine 5'-phosphate + diphosphate = orotate + 5-phospho-alpha-D-ribose 1-diphosphate. Its pathway is pyrimidine metabolism; UMP biosynthesis via de novo pathway; UMP from orotate: step 1/2. Functionally, catalyzes the transfer of a ribosyl phosphate group from 5-phosphoribose 1-diphosphate to orotate, leading to the formation of orotidine monophosphate (OMP). The chain is Orotate phosphoribosyltransferase from Thermotoga neapolitana (strain ATCC 49049 / DSM 4359 / NBRC 107923 / NS-E).